The following is a 233-amino-acid chain: MELTEFEARVIGCLLEKEVTTPDQYPLSLNALTLACNQKSSREPVMSLTESQVQASLDELAKKRLVSEQSGFGSRVVKYKHRFCNTEFSELQFSSAELSLICLLLLRGPQTPGELKSRSQRLHEFSHVSEVEHCLYSLSQSDKPHVAMLAREPNKREHRYIELFSHGVSEALTLAADTQHQRPPQTPHLSSRTNVDNSYESDERFTQLEGRINQLEQQVASLEAKLLGLLSNT.

Residues 178-198 (TQHQRPPQTPHLSSRTNVDNS) are compositionally biased toward polar residues. Residues 178–204 (TQHQRPPQTPHLSSRTNVDNSYESDER) form a disordered region.

It belongs to the UPF0502 family.

The polypeptide is UPF0502 protein Sden_2282 (Shewanella denitrificans (strain OS217 / ATCC BAA-1090 / DSM 15013)).